The primary structure comprises 210 residues: N-(5'-phosphoribosyl)anthranilate isomerase (210 aa).

The protein belongs to the TrpF family.

It catalyses the reaction N-(5-phospho-beta-D-ribosyl)anthranilate = 1-(2-carboxyphenylamino)-1-deoxy-D-ribulose 5-phosphate. It functions in the pathway amino-acid biosynthesis; L-tryptophan biosynthesis; L-tryptophan from chorismate: step 3/5. In Trichormus variabilis (strain ATCC 29413 / PCC 7937) (Anabaena variabilis), this protein is N-(5'-phosphoribosyl)anthranilate isomerase.